Here is a 604-residue protein sequence, read N- to C-terminus: Prostaglandin G/H synthase 2 (604 aa).

The N-terminal stretch at 1–17 (MLARALLLCAALALGQA) is a signal peptide. In terms of domain architecture, EGF-like spans 18–55 (ANPCCSNPCQNRGECLSVGFDRYKCDCTRTGYYGENCT). Disulfide bonds link Cys-21/Cys-32, Cys-22/Cys-145, Cys-26/Cys-42, and Cys-44/Cys-54. A glycan (N-linked (GlcNAc...) asparagine) is linked at Asn-53. Arg-106 lines the substrate pocket. Asn-130 carries N-linked (GlcNAc...) asparagine glycosylation. The active-site Proton acceptor is the His-193. Tyr-341 serves as a coordination point for substrate. Tyr-371 serves as the catalytic For cyclooxygenase activity. His-374 contributes to the heme b binding site. Asn-396 carries N-linked (GlcNAc...) asparagine glycosylation. Cys-526 carries the S-nitrosocysteine modification. Cysteines 555 and 561 form a disulfide. Asn-580 carries an N-linked (GlcNAc...) asparagine glycan.

It belongs to the prostaglandin G/H synthase family. As to quaternary structure, homodimer. Heme b is required as a cofactor. Post-translationally, S-nitrosylation by NOS2 (iNOS) activates enzyme activity. S-nitrosylation may take place on different Cys residues in addition to Cys-526.

The protein resides in the microsome membrane. Its subcellular location is the endoplasmic reticulum membrane. The protein localises to the nucleus inner membrane. It localises to the nucleus outer membrane. It carries out the reaction (5Z,8Z,11Z,14Z)-eicosatetraenoate + AH2 + 2 O2 = prostaglandin H2 + A + H2O. The catalysed reaction is (5Z,8Z,11Z,14Z)-eicosatetraenoate + 2 O2 = prostaglandin G2. It catalyses the reaction prostaglandin G2 + AH2 = prostaglandin H2 + A + H2O. The enzyme catalyses (5Z,8Z,11Z,14Z,17Z)-eicosapentaenoate + 2 O2 = prostaglandin G3. It carries out the reaction prostaglandin G3 + AH2 = prostaglandin H3 + A + H2O. The catalysed reaction is (8Z,11Z,14Z)-eicosatrienoate + 2 O2 = prostaglandin G1. It catalyses the reaction prostaglandin G1 + AH2 = prostaglandin H1 + A + H2O. The enzyme catalyses 2-(5Z,8Z,11Z,14Z)-eicosatetraenoyl-sn-glycero-3-phosphoethanolamine + 2 O2 = 2-(prostaglandin G2)-sn-glycero-3-phosphoethanolamine. It carries out the reaction 2-(prostaglandin G2)-sn-glycero-3-phosphoethanolamine + AH2 = 2-(prostaglandin H2)-sn-glycero-3-phosphoethanolamine + A + H2O. The catalysed reaction is 2-(5Z,8Z,11Z,14Z)-eicosatetraenoyl-sn-glycero-3-phosphocholine + 2 O2 = 2-(prostaglandin G2)-sn-glycero-3-phosphocholine. It catalyses the reaction 2-(prostaglandin G2)-sn-glycero-3-phosphocholine + AH2 = 2-(prostaglandin H2)-sn-glycero-3-phosphocholine + A + H2O. The enzyme catalyses (15S)-hydroperoxy-(5Z,8Z,11Z,13E)-eicosatetraenoate + AH2 = (15S)-hydroxy-(5Z,8Z,11Z,13E)-eicosatetraenoate + A + H2O. It carries out the reaction 2-(5Z,8Z,11Z,14Z)-eicosatetraenoyl-sn-glycero-3-phosphocholine + AH2 + O2 = 2-[(15S)-hydroxy-(5Z,8Z,11Z,13E)-eicosatetraenoyl]-sn-glycero-3-phosphocholine + A + H2O. The catalysed reaction is 2-(5Z,8Z,11Z,14Z)-eicosatetraenoyl-sn-glycero-3-phosphocholine + AH2 + O2 = 2-[(15R)-hydroxy-(5Z,8Z,11Z,13E)-eicosatetraenoyl]-sn-glycero-3-phosphocholine + A + H2O. It catalyses the reaction 2-(5Z,8Z,11Z,14Z)-eicosatetraenoyl-sn-glycero-3-phosphocholine + AH2 + O2 = 2-[(11R)-hydroxy-(5Z,8Z,12E,14Z)-eicosatetraenoyl]-sn-glycero-3-phosphocholine + A + H2O. The enzyme catalyses (9Z,12Z)-octadecadienoate + AH2 + O2 = 9-hydroxy-(10E,12Z)-octadecadienoate + A + H2O. It carries out the reaction (9Z,12Z)-octadecadienoate + AH2 + O2 = 13-hydroxy-(9Z,11E)-octadecadienoate + A + H2O. The catalysed reaction is (5Z,8Z,11Z,14Z)-eicosatetraenoate + AH2 + O2 = (15R)-hydroxy-(5Z,8Z,11Z,13E)-eicosatetraenoate + A + H2O. It catalyses the reaction (5Z,8Z,11Z,14Z)-eicosatetraenoate + AH2 + O2 = (11R)-hydroxy-(5Z,8Z,12E,14Z)-eicosatetraenoate + A + H2O. The enzyme catalyses (5Z,8Z,11Z,14Z,17Z)-eicosapentaenoate + AH2 + O2 = (11R)-hydroxy-(5Z,8Z,12E,14Z,17Z)-eicosapentaenoate + A + H2O. It carries out the reaction (5Z,8Z,11Z,14Z,17Z)-eicosapentaenoate + AH2 + O2 = (18S)-hydroxy-(5Z,8Z,11Z,14Z,16E)-eicosapentaenoate + A + H2O. The catalysed reaction is (5Z,8Z,11Z,14Z,17Z)-eicosapentaenoate + AH2 + O2 = (18R)-hydroxy-(5Z,8Z,11Z,14Z,16E)-eicosapentaenoate + A + H2O. It catalyses the reaction (5Z,8Z,11Z,14Z,17Z)-eicosapentaenoate + AH2 + O2 = (15R)-hydroxy-(5Z,8Z,11Z,13E,17Z)-eicosapentaenoate + A + H2O. The enzyme catalyses (5Z,8Z,11Z,14Z,17Z)-eicosapentaenoate + AH2 + O2 = (15S)-hydroxy-(5Z,8Z,11Z,13E,17Z)-eicosapentaenoate + A + H2O. It carries out the reaction (7Z,10Z,13Z,16Z,19Z)-docosapentaenoate + AH2 + O2 = 13R-hydroxy-(7Z,10Z,14E,16Z,19Z)-docosapentaenoate + A + H2O. The catalysed reaction is (4Z,7Z,10Z,13Z,16Z,19Z)-docosahexaenoate + AH2 + O2 = 13-hydroxy-(4Z,7Z,10Z,14E,16Z,19Z)-docosahexaenoate + A + H2O. It catalyses the reaction (5S)-hydroxy-(6E,8Z,11Z,14Z)-eicosatetraenoate + AH2 + O2 = (5S,15R)-dihydroxy-(6E,8Z,11Z,13E)-eicosatetraenoate + A + H2O. The enzyme catalyses (4Z,7Z,10Z,13Z,16Z,19Z)-docosahexaenoate + AH2 + O2 = 17R-hydroxy-(4Z,7Z,10Z,13Z,15E,19Z)-docosahexaenoate + A + H2O. It carries out the reaction (5S)-hydroxy-(6E,8Z,11Z,14Z)-eicosatetraenoate + AH2 + O2 = (5S,15S)-dihydroxy-(6E,8Z,11Z,13E)-eicosatetraenoate + A + H2O. The catalysed reaction is (5S)-hydroxy-(6E,8Z,11Z,14Z)-eicosatetraenoate + AH2 + O2 = (5S,11R)-dihydroxy-(6E,8Z,12E,14Z)-eicosatetraenoate + A + H2O. It catalyses the reaction 2-(5Z,8Z,11Z,14Z-eicosatetraenoyl)-glycerol + 2 O2 = 2-glyceryl-prostaglandin G2. The enzyme catalyses 2-glyceryl-prostaglandin G2 + AH2 = 2-glyceryl-prostaglandin H2 + A + H2O. It carries out the reaction (5Z,8Z,11Z,14Z)-eicosatetraenoate + O2 = (15R)-hydroperoxy-(5Z,8Z,11Z,13E)-eicosatetraenoate. The catalysed reaction is (5Z,8Z,11Z,14Z)-eicosatetraenoate + O2 = 11R-hydroperoxy-(5Z,8Z,12E,14Z)-eicosatetraenoate. It catalyses the reaction (9Z,12Z)-octadecadienoate + AH2 + O2 = (9R)-hydroxy-(10E,12Z)-octadecadienoate + A + H2O. The enzyme catalyses (9Z,12Z)-octadecadienoate + AH2 + O2 = (9S)-hydroxy-(10E,12Z)-octadecadienoate + A + H2O. It carries out the reaction (9Z,12Z)-octadecadienoate + AH2 + O2 = (13S)-hydroxy-(9Z,11E)-octadecadienoate + A + H2O. The catalysed reaction is (9Z,12Z)-octadecadienoate + AH2 + O2 = (13R)-hydroxy-(9Z,11E)-octadecadienoate + A + H2O. It participates in lipid metabolism; prostaglandin biosynthesis. Dual cyclooxygenase and peroxidase in the biosynthesis pathway of prostanoids, a class of C20 oxylipins mainly derived from arachidonate ((5Z,8Z,11Z,14Z)-eicosatetraenoate, AA, C20:4(n-6)), with a particular role in the inflammatory response. The cyclooxygenase activity oxygenates AA to the hydroperoxy endoperoxide prostaglandin G2 (PGG2), and the peroxidase activity reduces PGG2 to the hydroxy endoperoxide prostaglandin H2 (PGH2), the precursor of all 2-series prostaglandins and thromboxanes. This complex transformation is initiated by abstraction of hydrogen at carbon 13 (with S-stereochemistry), followed by insertion of molecular O2 to form the endoperoxide bridge between carbon 9 and 11 that defines prostaglandins. The insertion of a second molecule of O2 (bis-oxygenase activity) yields a hydroperoxy group in PGG2 that is then reduced to PGH2 by two electrons. Similarly catalyzes successive cyclooxygenation and peroxidation of dihomo-gamma-linoleate (DGLA, C20:3(n-6)) and eicosapentaenoate (EPA, C20:5(n-3)) to corresponding PGH1 and PGH3, the precursors of 1- and 3-series prostaglandins. In an alternative pathway of prostanoid biosynthesis, converts 2-arachidonoyl lysophopholipids to prostanoid lysophopholipids, which are then hydrolyzed by intracellular phospholipases to release free prostanoids. Metabolizes 2-arachidonoyl glycerol yielding the glyceryl ester of PGH2, a process that can contribute to pain response. Generates lipid mediators from n-3 and n-6 polyunsaturated fatty acids (PUFAs) via a lipoxygenase-type mechanism. Oxygenates PUFAs to hydroperoxy compounds and then reduces them to corresponding alcohols. Plays a role in the generation of resolution phase interaction products (resolvins) during both sterile and infectious inflammation. Metabolizes docosahexaenoate (DHA, C22:6(n-3)) to 17R-HDHA, a precursor of the D-series resolvins (RvDs). As a component of the biosynthetic pathway of E-series resolvins (RvEs), converts eicosapentaenoate (EPA, C20:5(n-3)) primarily to 18S-HEPE that is further metabolized by ALOX5 and LTA4H to generate 18S-RvE1 and 18S-RvE2. In vascular endothelial cells, converts docosapentaenoate (DPA, C22:5(n-3)) to 13R-HDPA, a precursor for 13-series resolvins (RvTs) shown to activate macrophage phagocytosis during bacterial infection. In activated leukocytes, contributes to oxygenation of hydroxyeicosatetraenoates (HETE) to diHETES (5,15-diHETE and 5,11-diHETE). Can also use linoleate (LA, (9Z,12Z)-octadecadienoate, C18:2(n-6)) as substrate and produce hydroxyoctadecadienoates (HODEs) in a regio- and stereospecific manner, being (9R)-HODE ((9R)-hydroxy-(10E,12Z)-octadecadienoate) and (13S)-HODE ((13S)-hydroxy-(9Z,11E)-octadecadienoate) its major products. During neuroinflammation, plays a role in neuronal secretion of specialized preresolving mediators (SPMs) 15R-lipoxin A4 that regulates phagocytic microglia. In Cavia porcellus (Guinea pig), this protein is Prostaglandin G/H synthase 2 (PTGS2).